Here is a 483-residue protein sequence, read N- to C-terminus: MPTLMVQGTTSDAGKSTLVTALCRWARRQGVSVAPFKPQNMALNSAVTADGGEIGRAQAVQAQAAGLAPHTDMNPVLLKPNSDMGAQVIIHGRAIGNMQALTYHGYKPVAMAAVLESHARLVERHQLVLVEGAGSPAEINLRAGDIANMGFAEAVDCPVILIADIDKGGVFAHLVGTLELLSPSEQARIRGFVINRFRGDIALLKPGLDWLEQRTGKPVLGVLPYLTDFHLEAEDAVDTRQQAKSAQALRVVVPVLPRISNHTDFDPLRLHPQVQLTFVGPGQAIPPADLIILPGSKSVRADLARLREQGWDTAIARHLRYGGKLLGICGGLQMLGRQIHDPHGLEGAAGSSEGLGLLDFETVLEPEKQLRNVRGQLCLEQAQVSGYEIHAGVSRGPGLNGAVQLDDGRSDGGLSADGQVLGTYLHGLFEQPSAFAALLRWAGLHEVQTVDYQALRERDIERLADQVELHLDNEQLRMLCGIR.

The GATase cobBQ-type domain maps to 248 to 434 (ALRVVVPVLP…LHGLFEQPSA (187 aa)). The Nucleophile role is filled by Cys329. The active site involves His426.

Belongs to the CobB/CobQ family. CobQ subfamily.

The protein operates within cofactor biosynthesis; adenosylcobalamin biosynthesis. Catalyzes amidations at positions B, D, E, and G on adenosylcobyrinic A,C-diamide. NH(2) groups are provided by glutamine, and one molecule of ATP is hydrogenolyzed for each amidation. This chain is Cobyric acid synthase, found in Ectopseudomonas mendocina (strain ymp) (Pseudomonas mendocina).